Consider the following 201-residue polypeptide: Holliday junction branch migration complex subunit RuvA (201 aa).

Residues 1-63 (MYDYIKGTVT…EDNISLFGFQ (63 aa)) form a domain I region. The domain II stretch occupies residues 64–142 (TTEERYLFKK…DVVASEIVYV (79 aa)). Residues 143–153 (APENDMVAGLS) are flexible linker. Positions 153–201 (SPQLEEAVLALEALGYSTRELKKVIPKLSKEEDLTSDAYIKLALQLMTK) are domain III.

Belongs to the RuvA family. As to quaternary structure, homotetramer. Forms an RuvA(8)-RuvB(12)-Holliday junction (HJ) complex. HJ DNA is sandwiched between 2 RuvA tetramers; dsDNA enters through RuvA and exits via RuvB. An RuvB hexamer assembles on each DNA strand where it exits the tetramer. Each RuvB hexamer is contacted by two RuvA subunits (via domain III) on 2 adjacent RuvB subunits; this complex drives branch migration. In the full resolvosome a probable DNA-RuvA(4)-RuvB(12)-RuvC(2) complex forms which resolves the HJ.

It localises to the cytoplasm. Its function is as follows. The RuvA-RuvB-RuvC complex processes Holliday junction (HJ) DNA during genetic recombination and DNA repair, while the RuvA-RuvB complex plays an important role in the rescue of blocked DNA replication forks via replication fork reversal (RFR). RuvA specifically binds to HJ cruciform DNA, conferring on it an open structure. The RuvB hexamer acts as an ATP-dependent pump, pulling dsDNA into and through the RuvAB complex. HJ branch migration allows RuvC to scan DNA until it finds its consensus sequence, where it cleaves and resolves the cruciform DNA. The chain is Holliday junction branch migration complex subunit RuvA from Listeria monocytogenes serotype 4b (strain CLIP80459).